Reading from the N-terminus, the 401-residue chain is Probable E3 ubiquitin-protein ligase RHC2A (401 aa).

Residues 41–93 (TPSDSFTTTTTTQHRSPTRFPPPSSSSSTPSASMHADNSPTPTIVTRTRSNRS) form a disordered region. A compositionally biased stretch (polar residues) spans 76–93 (ADNSPTPTIVTRTRSNRS). The segment at 201 to 242 (CAVCKENFVLKSSAREMPCNHIYHPDCILPWLAIRNSCPVCR) adopts an RING-type; atypical zinc-finger fold.

It catalyses the reaction S-ubiquitinyl-[E2 ubiquitin-conjugating enzyme]-L-cysteine + [acceptor protein]-L-lysine = [E2 ubiquitin-conjugating enzyme]-L-cysteine + N(6)-ubiquitinyl-[acceptor protein]-L-lysine.. Its pathway is protein modification; protein ubiquitination. Functionally, probable E3 ubiquitin-protein ligase that may possess E3 ubiquitin ligase activity in vitro. This chain is Probable E3 ubiquitin-protein ligase RHC2A, found in Arabidopsis thaliana (Mouse-ear cress).